Consider the following 272-residue polypeptide: Orotidine 5'-phosphate decarboxylase (272 aa).

The Proton donor role is filled by lysine 95.

It belongs to the OMP decarboxylase family. Type 2 subfamily.

It catalyses the reaction orotidine 5'-phosphate + H(+) = UMP + CO2. It participates in pyrimidine metabolism; UMP biosynthesis via de novo pathway; UMP from orotate: step 2/2. The polypeptide is Orotidine 5'-phosphate decarboxylase (Cupriavidus necator (strain ATCC 17699 / DSM 428 / KCTC 22496 / NCIMB 10442 / H16 / Stanier 337) (Ralstonia eutropha)).